Reading from the N-terminus, the 561-residue chain is Reductase FVEG_12641 (561 aa).

The disordered stretch occupies residues 1-26 (MGVQSTANLPKETVSHLDTAPTPKPG). One can recognise an MOSC domain in the interval 52-189 (QQHDGPVFCS…ICKGDTISLL (138 aa)). Positions 237-342 (SAPKTYTLVD…PGSNPGAMEN (106 aa)) constitute an FAD-binding FR-type domain. FMN is bound by residues 288 to 289 (FE), 305 to 307 (GVS), 313 to 316 (RGGS), and threonine 362. Residues 474 to 561 (FEVEVDEPDS…GIGRLRIEID (88 aa)) form the 2Fe-2S ferredoxin-type domain. Cysteine 512 contributes to the [2Fe-2S] cluster binding site. Serine 514 contacts FMN. Residues cysteine 517, cysteine 520, and cysteine 548 each coordinate [2Fe-2S] cluster.

This sequence belongs to the PDR/VanB family. Monomer. It depends on FMN as a cofactor.

Its function is as follows. Reductase; part of the Fusarium detoxification of benzoxazolinone cluster 2 (FDB2) involved in the degradation of benzoxazolinones produced by the host plant. Maize, wheat, and rye produce the 2 benzoxazinone phytoanticipins 2,4-dihy-droxy-7-methoxy-1,4-benzoxazin-3-one (DIMBOA) and 2,4-dihydroxy-1,4-benzoxazin-3-one (DIBOA) that, due to their inherent instability once released, spontaneously degrade to the more stable corresponding benzoxazolinones, 6-methoxy-2-benzoxazolinone (MBOA) and 2-benzoxazolinone (BOA), respectively. The first step in the detoxification of benzoxazolinones involves the hydrolysis of the cyclic ester bond of benzoxazolinones by the FDB1 cluster gamma-lactamase MBL1 to aminophenols. MBL1 is able to convert BOA into 2-aminophenol (2-AP), as well as MBOA into 5-methoxy-2-aminophenol (2-AMP). The FDB2 cluster N-malonyltransferase FDB2/NAT1 then metabolizes aminophenols via N-malonylation to non-toxic malonamic acids. FDB2/NAT1 converts 2-AP into N-(2-hydroxyphenyl) malonamic acid (HPMA) and 2-AMP into N-(2-hydroxy-4-methoxyphenyl) malonamic acid (HMPMA). The duplicated dienlactone hydrolases DLH1 and DLH2 may provide redundant function for hydrolyzing the lactone moiety in the BOA molecule. The roles of the amidases an other enzymes encoded by the 2 FDB clusters have not been identified so far. The chain is Reductase FVEG_12641 from Gibberella moniliformis (strain M3125 / FGSC 7600) (Maize ear and stalk rot fungus).